The chain runs to 400 residues: D-alanyl-D-alanine carboxypeptidase DacC (400 aa).

The first 27 residues, 1–27 (MTQYSSLLRGLAAGSAFLFLFAPTAFA), serve as a signal peptide directing secretion. The active-site Acyl-ester intermediate is the S66. K69 (proton acceptor) is an active-site residue. S132 is an active-site residue. Residue K235 participates in substrate binding. A required for inner membrane binding region spans residues 383-400 (VWDFVMMKFHQWFGSWFS).

This sequence belongs to the peptidase S11 family.

It localises to the cell inner membrane. It catalyses the reaction Preferential cleavage: (Ac)2-L-Lys-D-Ala-|-D-Ala. Also transpeptidation of peptidyl-alanyl moieties that are N-acyl substituents of D-alanine.. Its pathway is cell wall biogenesis; peptidoglycan biosynthesis. Its function is as follows. Removes C-terminal D-alanyl residues from sugar-peptide cell wall precursors. This is D-alanyl-D-alanine carboxypeptidase DacC (dacC) from Escherichia coli (strain K12).